Consider the following 507-residue polypeptide: ATP synthase subunit alpha, chloroplastic (507 aa).

170 to 177 serves as a coordination point for ATP; that stretch reads GDRQTGKT.

This sequence belongs to the ATPase alpha/beta chains family. As to quaternary structure, F-type ATPases have 2 components, CF(1) - the catalytic core - and CF(0) - the membrane proton channel. CF(1) has five subunits: alpha(3), beta(3), gamma(1), delta(1), epsilon(1). CF(0) has four main subunits: a, b, b' and c.

Its subcellular location is the plastid. It is found in the chloroplast thylakoid membrane. The catalysed reaction is ATP + H2O + 4 H(+)(in) = ADP + phosphate + 5 H(+)(out). Functionally, produces ATP from ADP in the presence of a proton gradient across the membrane. The alpha chain is a regulatory subunit. The polypeptide is ATP synthase subunit alpha, chloroplastic (Chloranthus spicatus (Chulantree)).